Reading from the N-terminus, the 268-residue chain is Glucosamine-6-phosphate deaminase (268 aa).

The Proton acceptor; for enolization step role is filled by D72. D141 (for ring-opening step) is an active-site residue. H143 serves as the catalytic Proton acceptor; for ring-opening step. Residue E148 is the For ring-opening step of the active site.

This sequence belongs to the glucosamine/galactosamine-6-phosphate isomerase family. NagB subfamily. As to quaternary structure, homohexamer.

It carries out the reaction alpha-D-glucosamine 6-phosphate + H2O = beta-D-fructose 6-phosphate + NH4(+). Its pathway is amino-sugar metabolism; N-acetylneuraminate degradation; D-fructose 6-phosphate from N-acetylneuraminate: step 5/5. With respect to regulation, allosterically activated by N-acetylglucosamine 6-phosphate (GlcNAc6P). In terms of biological role, catalyzes the reversible isomerization-deamination of glucosamine 6-phosphate (GlcN6P) to form fructose 6-phosphate (Fru6P) and ammonium ion. This chain is Glucosamine-6-phosphate deaminase, found in Histophilus somni (strain 129Pt) (Haemophilus somnus).